The chain runs to 212 residues: Probable transaldolase (212 aa).

The Schiff-base intermediate with substrate role is filled by Lys84.

This sequence belongs to the transaldolase family. Type 3B subfamily.

It localises to the cytoplasm. It catalyses the reaction D-sedoheptulose 7-phosphate + D-glyceraldehyde 3-phosphate = D-erythrose 4-phosphate + beta-D-fructose 6-phosphate. It functions in the pathway carbohydrate degradation; pentose phosphate pathway; D-glyceraldehyde 3-phosphate and beta-D-fructose 6-phosphate from D-ribose 5-phosphate and D-xylulose 5-phosphate (non-oxidative stage): step 2/3. In terms of biological role, transaldolase is important for the balance of metabolites in the pentose-phosphate pathway. This is Probable transaldolase from Bacillus velezensis (strain DSM 23117 / BGSC 10A6 / LMG 26770 / FZB42) (Bacillus amyloliquefaciens subsp. plantarum).